We begin with the raw amino-acid sequence, 632 residues long: 2-oxoacid:ferredoxin oxidoreductase subunit alpha (632 aa).

The YPITP motif signature appears at 254-258 (YPITP). The substrate site is built by Thr-257 and Arg-345.

In terms of assembly, heterodimer composed of an alpha and a beta subunit.

The enzyme catalyses a 2-oxocarboxylate + 2 oxidized [2Fe-2S]-[ferredoxin] + CoA = an acyl-CoA + 2 reduced [2Fe-2S]-[ferredoxin] + CO2 + H(+). In terms of biological role, catalyzes the coenzyme A-dependent oxidative decarboxylation of different 2-oxoacids such as 2-oxoglutarate, pyruvate and 2-oxobutyrate to form their CoA derivatives. The protein is 2-oxoacid:ferredoxin oxidoreductase subunit alpha of Saccharolobus solfataricus (Sulfolobus solfataricus).